A 315-amino-acid polypeptide reads, in one-letter code: DNA-directed RNA polymerase subunit alpha (315 aa).

Positions M1 to K228 are alpha N-terminal domain (alpha-NTD). Residues K245–E315 are alpha C-terminal domain (alpha-CTD).

The protein belongs to the RNA polymerase alpha chain family. In terms of assembly, homodimer. The RNAP catalytic core consists of 2 alpha, 1 beta, 1 beta' and 1 omega subunit. When a sigma factor is associated with the core the holoenzyme is formed, which can initiate transcription.

The enzyme catalyses RNA(n) + a ribonucleoside 5'-triphosphate = RNA(n+1) + diphosphate. In terms of biological role, DNA-dependent RNA polymerase catalyzes the transcription of DNA into RNA using the four ribonucleoside triphosphates as substrates. The protein is DNA-directed RNA polymerase subunit alpha of Alkaliphilus metalliredigens (strain QYMF).